The chain runs to 321 residues: Malate dehydrogenase (321 aa).

NAD(+) is bound by residues 10–15 (GGGQIG) and Asp34. The substrate site is built by Arg83 and Arg89. NAD(+) contacts are provided by residues Asn96 and 119-121 (ISN). Positions 121 and 152 each coordinate substrate. The active-site Proton acceptor is His176.

The protein belongs to the LDH/MDH superfamily. MDH type 3 family.

It catalyses the reaction (S)-malate + NAD(+) = oxaloacetate + NADH + H(+). Its function is as follows. Catalyzes the reversible oxidation of malate to oxaloacetate. The chain is Malate dehydrogenase from Trichlorobacter lovleyi (strain ATCC BAA-1151 / DSM 17278 / SZ) (Geobacter lovleyi).